A 438-amino-acid chain; its full sequence is Thymidine phosphorylase (438 aa).

This sequence belongs to the thymidine/pyrimidine-nucleoside phosphorylase family. In terms of assembly, homodimer.

It carries out the reaction thymidine + phosphate = 2-deoxy-alpha-D-ribose 1-phosphate + thymine. It participates in pyrimidine metabolism; dTMP biosynthesis via salvage pathway; dTMP from thymine: step 1/2. Its function is as follows. The enzymes which catalyze the reversible phosphorolysis of pyrimidine nucleosides are involved in the degradation of these compounds and in their utilization as carbon and energy sources, or in the rescue of pyrimidine bases for nucleotide synthesis. The chain is Thymidine phosphorylase from Burkholderia cenocepacia (strain ATCC BAA-245 / DSM 16553 / LMG 16656 / NCTC 13227 / J2315 / CF5610) (Burkholderia cepacia (strain J2315)).